Here is a 232-residue protein sequence, read N- to C-terminus: 5'-methylthioadenosine/S-adenosylhomocysteine nucleosidase (232 aa).

The active-site Proton acceptor is the glutamate 12. Substrate contacts are provided by residues glycine 78, isoleucine 152, and 173-174; that span reads ME. Aspartate 197 acts as the Proton donor in catalysis.

It belongs to the PNP/UDP phosphorylase family. MtnN subfamily. Homodimer.

The enzyme catalyses S-adenosyl-L-homocysteine + H2O = S-(5-deoxy-D-ribos-5-yl)-L-homocysteine + adenine. The catalysed reaction is S-methyl-5'-thioadenosine + H2O = 5-(methylsulfanyl)-D-ribose + adenine. It catalyses the reaction 5'-deoxyadenosine + H2O = 5-deoxy-D-ribose + adenine. The protein operates within amino-acid biosynthesis; L-methionine biosynthesis via salvage pathway; S-methyl-5-thio-alpha-D-ribose 1-phosphate from S-methyl-5'-thioadenosine (hydrolase route): step 1/2. Catalyzes the irreversible cleavage of the glycosidic bond in both 5'-methylthioadenosine (MTA) and S-adenosylhomocysteine (SAH/AdoHcy) to adenine and the corresponding thioribose, 5'-methylthioribose and S-ribosylhomocysteine, respectively. Also cleaves 5'-deoxyadenosine, a toxic by-product of radical S-adenosylmethionine (SAM) enzymes, into 5-deoxyribose and adenine. Thus, is required for in vivo function of the radical SAM enzymes biotin synthase and lipoic acid synthase, that are inhibited by 5'-deoxyadenosine accumulation. The chain is 5'-methylthioadenosine/S-adenosylhomocysteine nucleosidase from Salmonella dublin (strain CT_02021853).